A 61-amino-acid polypeptide reads, in one-letter code: Small ribosomal subunit protein uS14 (61 aa).

Zn(2+) is bound by residues C24, C27, C40, and C43.

This sequence belongs to the universal ribosomal protein uS14 family. Zinc-binding uS14 subfamily. Part of the 30S ribosomal subunit. Contacts proteins S3 and S10. It depends on Zn(2+) as a cofactor.

In terms of biological role, binds 16S rRNA, required for the assembly of 30S particles and may also be responsible for determining the conformation of the 16S rRNA at the A site. This chain is Small ribosomal subunit protein uS14, found in Leptospira borgpetersenii serovar Hardjo-bovis (strain JB197).